We begin with the raw amino-acid sequence, 83 residues long: Large ribosomal subunit protein bL31B (83 aa).

This sequence belongs to the bacterial ribosomal protein bL31 family. Type B subfamily. As to quaternary structure, part of the 50S ribosomal subunit.

Functionally, binds the 23S rRNA. The protein is Large ribosomal subunit protein bL31B of Lactobacillus delbrueckii subsp. bulgaricus (strain ATCC 11842 / DSM 20081 / BCRC 10696 / JCM 1002 / NBRC 13953 / NCIMB 11778 / NCTC 12712 / WDCM 00102 / Lb 14).